A 237-amino-acid chain; its full sequence is Phosphoribosylaminoimidazole-succinocarboxamide synthase (237 aa).

This sequence belongs to the SAICAR synthetase family.

It carries out the reaction 5-amino-1-(5-phospho-D-ribosyl)imidazole-4-carboxylate + L-aspartate + ATP = (2S)-2-[5-amino-1-(5-phospho-beta-D-ribosyl)imidazole-4-carboxamido]succinate + ADP + phosphate + 2 H(+). The protein operates within purine metabolism; IMP biosynthesis via de novo pathway; 5-amino-1-(5-phospho-D-ribosyl)imidazole-4-carboxamide from 5-amino-1-(5-phospho-D-ribosyl)imidazole-4-carboxylate: step 1/2. The polypeptide is Phosphoribosylaminoimidazole-succinocarboxamide synthase (Edwardsiella ictaluri (strain 93-146)).